An 89-amino-acid polypeptide reads, in one-letter code: Phosphoribulokinase, chloroplastic (89 aa).

The disordered stretch occupies residues 1 to 22; the sequence is LTSVFGGAAEPPRGGNPDSNTL.

Belongs to the phosphoribulokinase family.

It is found in the plastid. The protein resides in the chloroplast. It carries out the reaction D-ribulose 5-phosphate + ATP = D-ribulose 1,5-bisphosphate + ADP + H(+). It functions in the pathway carbohydrate biosynthesis; Calvin cycle. Light regulated via thioredoxin by reversible oxidation/reduction of sulfhydryl/disulfide groups. The sequence is that of Phosphoribulokinase, chloroplastic from Vitis sp. (Grape).